The chain runs to 445 residues: Ribosomal protein uS12 methylthiotransferase RimO (445 aa).

Residues P10 to P120 enclose the MTTase N-terminal domain. [4Fe-4S] cluster-binding residues include C19, C55, C84, C153, C157, and C160. One can recognise a Radical SAM core domain in the interval L139–R378. Positions Q380–L445 constitute a TRAM domain.

It belongs to the methylthiotransferase family. RimO subfamily. It depends on [4Fe-4S] cluster as a cofactor.

The protein resides in the cytoplasm. It catalyses the reaction L-aspartate(89)-[ribosomal protein uS12]-hydrogen + (sulfur carrier)-SH + AH2 + 2 S-adenosyl-L-methionine = 3-methylsulfanyl-L-aspartate(89)-[ribosomal protein uS12]-hydrogen + (sulfur carrier)-H + 5'-deoxyadenosine + L-methionine + A + S-adenosyl-L-homocysteine + 2 H(+). Catalyzes the methylthiolation of an aspartic acid residue of ribosomal protein uS12. This chain is Ribosomal protein uS12 methylthiotransferase RimO, found in Pseudomonas fluorescens (strain ATCC BAA-477 / NRRL B-23932 / Pf-5).